Here is a 388-residue protein sequence, read N- to C-terminus: Chorismate synthase (388 aa).

NADP(+)-binding residues include R39 and R45. FMN is bound by residues 132–134, 251–252, G296, 311–315, and R337; these read RSS, NA, and KPIPT.

The protein belongs to the chorismate synthase family. As to quaternary structure, homotetramer. Requires FMNH2 as cofactor.

It catalyses the reaction 5-O-(1-carboxyvinyl)-3-phosphoshikimate = chorismate + phosphate. It functions in the pathway metabolic intermediate biosynthesis; chorismate biosynthesis; chorismate from D-erythrose 4-phosphate and phosphoenolpyruvate: step 7/7. Its function is as follows. Catalyzes the anti-1,4-elimination of the C-3 phosphate and the C-6 proR hydrogen from 5-enolpyruvylshikimate-3-phosphate (EPSP) to yield chorismate, which is the branch point compound that serves as the starting substrate for the three terminal pathways of aromatic amino acid biosynthesis. This reaction introduces a second double bond into the aromatic ring system. The protein is Chorismate synthase of Staphylococcus epidermidis (strain ATCC 35984 / DSM 28319 / BCRC 17069 / CCUG 31568 / BM 3577 / RP62A).